A 199-amino-acid polypeptide reads, in one-letter code: Cytochrome c oxidase subunit 2 (199 aa).

The chain crosses the membrane as a helical span at residues 1-13; the sequence is AICSLVLYLLSLM. The Mitochondrial matrix segment spans residues 14–26; that stretch reads LMEKLSSNTVDAQ. The chain crosses the membrane as a helical span at residues 27–54; it reads EVELIWTILPAIVLILLALPSLQILYMM. At 55-199 the chain is on the mitochondrial intermembrane side; it reads DEIDEPDLTL…SSLLSSSSSL (145 aa). Cu cation is bound by residues His128, Cys163, Glu165, Cys167, His171, and Met174. Glu165 provides a ligand contact to Mg(2+).

The protein belongs to the cytochrome c oxidase subunit 2 family. As to quaternary structure, component of the cytochrome c oxidase (complex IV, CIV), a multisubunit enzyme composed of 14 subunits. The complex is composed of a catalytic core of 3 subunits MT-CO1, MT-CO2 and MT-CO3, encoded in the mitochondrial DNA, and 11 supernumerary subunits COX4I, COX5A, COX5B, COX6A, COX6B, COX6C, COX7A, COX7B, COX7C, COX8 and NDUFA4, which are encoded in the nuclear genome. The complex exists as a monomer or a dimer and forms supercomplexes (SCs) in the inner mitochondrial membrane with NADH-ubiquinone oxidoreductase (complex I, CI) and ubiquinol-cytochrome c oxidoreductase (cytochrome b-c1 complex, complex III, CIII), resulting in different assemblies (supercomplex SCI(1)III(2)IV(1) and megacomplex MCI(2)III(2)IV(2)). Found in a complex with TMEM177, COA6, COX18, COX20, SCO1 and SCO2. Interacts with TMEM177 in a COX20-dependent manner. Interacts with COX20. Interacts with COX16. Requires Cu cation as cofactor.

The protein resides in the mitochondrion inner membrane. It catalyses the reaction 4 Fe(II)-[cytochrome c] + O2 + 8 H(+)(in) = 4 Fe(III)-[cytochrome c] + 2 H2O + 4 H(+)(out). Its function is as follows. Component of the cytochrome c oxidase, the last enzyme in the mitochondrial electron transport chain which drives oxidative phosphorylation. The respiratory chain contains 3 multisubunit complexes succinate dehydrogenase (complex II, CII), ubiquinol-cytochrome c oxidoreductase (cytochrome b-c1 complex, complex III, CIII) and cytochrome c oxidase (complex IV, CIV), that cooperate to transfer electrons derived from NADH and succinate to molecular oxygen, creating an electrochemical gradient over the inner membrane that drives transmembrane transport and the ATP synthase. Cytochrome c oxidase is the component of the respiratory chain that catalyzes the reduction of oxygen to water. Electrons originating from reduced cytochrome c in the intermembrane space (IMS) are transferred via the dinuclear copper A center (CU(A)) of subunit 2 and heme A of subunit 1 to the active site in subunit 1, a binuclear center (BNC) formed by heme A3 and copper B (CU(B)). The BNC reduces molecular oxygen to 2 water molecules using 4 electrons from cytochrome c in the IMS and 4 protons from the mitochondrial matrix. The chain is Cytochrome c oxidase subunit 2 (MT-CO2) from Rhea americana (Greater rhea).